The chain runs to 393 residues: Chalcone synthase DIII (393 aa).

Residue cysteine 164 is part of the active site.

It belongs to the thiolase-like superfamily. Chalcone/stilbene synthases family.

It carries out the reaction (E)-4-coumaroyl-CoA + 3 malonyl-CoA + 3 H(+) = 2',4,4',6'-tetrahydroxychalcone + 3 CO2 + 4 CoA. The protein operates within secondary metabolite biosynthesis; flavonoid biosynthesis. In terms of biological role, the primary product of this enzyme is 4,2',4',6'-tetrahydroxychalcone (also termed naringenin-chalcone or chalcone) which can under specific conditions spontaneously isomerize into naringenin. The protein is Chalcone synthase DIII (CHS-DIII) of Ipomoea batatas (Sweet potato).